Consider the following 590-residue polypeptide: Suprabasin (590 aa).

The N-terminal stretch at 1-25 (MHLARLVGSCSLLLLLGALSGWAAS) is a signal peptide. 4 disordered regions span residues 182-213 (GNEA…AHHG), 242-266 (FGQG…GVHH), 297-338 (GQGA…GVHH), and 545-570 (LNGN…SGAS). Low complexity-rich tracts occupy residues 190 to 200 (QGVHHAAGQAG), 243 to 254 (GQGAHHAAGQAG), 297 to 330 (GQGA…NEAG), and 546 to 559 (NGNH…HQGG). The span at 560–570 (ATTTPLASGAS) shows a compositional bias: polar residues.

Detected in thymus, uterus and esophagus.

The protein resides in the secreted. The sequence is that of Suprabasin (SBSN) from Homo sapiens (Human).